The following is a 76-amino-acid chain: Small ribosomal subunit protein bS18 (76 aa).

The protein belongs to the bacterial ribosomal protein bS18 family. In terms of assembly, part of the 30S ribosomal subunit. Forms a tight heterodimer with protein bS6.

Its function is as follows. Binds as a heterodimer with protein bS6 to the central domain of the 16S rRNA, where it helps stabilize the platform of the 30S subunit. The sequence is that of Small ribosomal subunit protein bS18 from Brevibacillus brevis (strain 47 / JCM 6285 / NBRC 100599).